The primary structure comprises 618 residues: Sodium/iodide cotransporter (618 aa).

Residues 1–14 (MEGAEAGARATFGP) lie on the Extracellular side of the membrane. The chain crosses the membrane as a helical span at residues 15-31 (WDYGVFATMLLVSTGIG). Over 32 to 56 (LWVGLARGGQRSADDFFTGGRQLAA) the chain is Cytoplasmic. The discontinuously helical transmembrane segment at 57-80 (VPVGLSLAASFMSAVQVLGVPAEA) threads the bilayer. Ser-69, Val-71, and Gln-72 together coordinate Na(+). Iodide is bound at residue Val-76. Residues 81–84 (ARYG) are Extracellular-facing. A helical transmembrane segment spans residues 85–105 (LKFLWMCVGQLLNSLLTALLF). Met-90 is a binding site for iodide. The Cytoplasmic segment spans residues 106–130 (LPIFYRLGLTSTYQYLELRFSRAVR). Residues 131–157 (LCGTLQYLVATMLYTGIVIYAPALILN) form a helical membrane-spanning segment. Tyr-144 lines the Na(+) pocket. Over 158–163 (QVTGLD) the chain is Extracellular. A helical membrane pass occupies residues 164 to 181 (IWASLLSTGIICTLYTTV). Residues 182–189 (GGMKAVVW) lie on the Cytoplasmic side of the membrane. The helical transmembrane segment at 190-208 (TDVFQVVVMLVGFWVILAR) threads the bilayer. At 209 to 243 (GVMLMGGPWNVLSLAQNHSRINLMDFDPDPRSRYT) the chain is on the extracellular side. The chain crosses the membrane as a discontinuously helical span at residues 244–266 (FWTFVVGGSLVWLSMYGVNQAQV). Trp-255 is an iodide binding site. Met-258 lines the Na(+) pocket. Residues 267–278 (QRYVACHTERKA) lie on the Cytoplasmic side of the membrane. A helical membrane pass occupies residues 279-301 (KLALLVNQLGLFLIVASAACCGI). Topologically, residues 302–335 (VMFVYYKDCDPLLTGRIAAPDQYMPLLVLDIFED) are extracellular. Residues 336–363 (LPGVPGLFLACAYSGTLSTASTSINAMA) traverse the membrane as a helical segment. At 364–386 (AVTVEDLIKPRMPSLAPRKLVFI) the chain is on the cytoplasmic side. The chain crosses the membrane as a helical span at residues 387 to 408 (SKGLSFIYGSTCLTVAALSSLL). At 409-411 (GGG) the chain is on the extracellular side. Residues 412 to 437 (VLQGSFTVMGVISGPLLGAFTLGMLL) traverse the membrane as a helical segment. Residue Leu-413 participates in iodide binding. Ser-416 and Phe-417 together coordinate Na(+). Phe-417 contributes to the iodide binding site. The Cytoplasmic portion of the chain corresponds to 438–441 (PACN). The chain crosses the membrane as a helical span at residues 442–465 (TPGVLSGLTAGLAVSLWVAVGATL). The Extracellular segment spans residues 466-520 (YPPGEQTMGVLPTSAAGCTNASVLPSPPGAANTSRGIPSSGMDSGRPAFADTFYA). Asn-485 and Asn-497 each carry an N-linked (GlcNAc...) asparagine glycan. Residues 521-545 (VSYLYYGALGTLTTMLCGALISYLT) form a helical membrane-spanning segment. Residues 546-618 (GPTKRSSLGP…YLGHDVETNL (73 aa)) are Cytoplasmic-facing. A Phosphoserine; by PKA modification is found at Ser-551. The span at 571–587 (PKEDTTTLEDSLVKGPE) shows a compositional bias: basic and acidic residues. Residues 571–618 (PKEDTTTLEDSLVKGPEDIPAATKKPPGFRPEAETHPLYLGHDVETNL) form a disordered region.

The protein belongs to the sodium:solute symporter (SSF) (TC 2.A.21) family. Monomer. Glycosylated.

The protein resides in the cell membrane. The protein localises to the cytoplasm. The catalysed reaction is iodide(out) + 2 Na(+)(out) = iodide(in) + 2 Na(+)(in). It carries out the reaction chlorate(out) + 2 Na(+)(out) = chlorate(in) + 2 Na(+)(in). It catalyses the reaction thiocyanate(out) + 2 Na(+)(out) = thiocyanate(in) + 2 Na(+)(in). The enzyme catalyses nitrate(out) + 2 Na(+)(out) = nitrate(in) + 2 Na(+)(in). The catalysed reaction is selenocyanate(out) + 2 Na(+)(out) = selenocyanate(in) + 2 Na(+)(in). Its activity is regulated as follows. Perchlorate inhibits iodide transport activity. Oxyanions inhibit iodide transport activity by blocking the binding sites for iodide and one of the sodium ions. Sodium:iodide symporter that mediates the transport of iodide into the thyroid gland. Can also mediate the transport of chlorate, thiocynate, nitrate and selenocynate. The sequence is that of Sodium/iodide cotransporter (Slc5a5) from Mus musculus (Mouse).